Consider the following 381-residue polypeptide: GDP-mannose transporter (381 aa).

The Cytoplasmic portion of the chain corresponds to 1–44 (MAEGKKTDDYTIQMDSIDQGNKSFEAPPPPQPRSPPSGSLSNNP). The disordered stretch occupies residues 19 to 41 (QGNKSFEAPPPPQPRSPPSGSLS). Positions 26 to 35 (APPPPQPRSP) are enriched in pro residues. The chain crosses the membrane as a helical span at residues 45 to 65 (ILPVLAYCGSSILMTVMNKYV). Topologically, residues 66 to 70 (LSGTD) are lumenal. A helical transmembrane segment spans residues 71 to 91 (FNLNFFLLCIQSLVCIIAIQT). The Cytoplasmic segment spans residues 92–109 (CKSCGLITYRDFSADEAR). The helical transmembrane segment at 110 to 126 (KWFPITLLLIGMIYTGS) threads the bilayer. Topologically, residues 127 to 133 (KALQFLS) are lumenal. A helical membrane pass occupies residues 134 to 150 (IPVYTIFKNLTIILIAY). Residues 151 to 159 (GEVLWFGGS) are Cytoplasmic-facing. The chain crosses the membrane as a helical span at residues 160–181 (VTGLTLFSFGLMVLSSIIAAWA). Residues 182–199 (DIKHAVESNGDATAKVST) are Lumenal-facing. The helical transmembrane segment at 200–220 (LNAGYIWMLVNCLCTSSYVLG) threads the bilayer. Topologically, residues 221–234 (MRKRIKLTNFKDFD) are cytoplasmic. A helical transmembrane segment spans residues 235-255 (TMFYNNLLSIPVLIVLSAFLE). Residues 256–273 (DWSSTNVNRNFPPMDRNS) lie on the Lumenal side of the membrane. The chain crosses the membrane as a helical span at residues 274–294 (IVFAMILSGLSSVFISYTSAW). Over 295–302 (CVRVTSST) the chain is Cytoplasmic. A helical transmembrane segment spans residues 303 to 323 (TYSMVGALNKLPIAISGLIFF). Topologically, residues 324 to 326 (DAP) are lumenal. A helical transmembrane segment spans residues 327–347 (VTFPSVSAIVVGFVSGIVYAV). The Cytoplasmic portion of the chain corresponds to 348 to 381 (AKIKQNAKPRTGVLPTANPPVSASSQSMRDSLRS). The tract at residues 358–381 (TGVLPTANPPVSASSQSMRDSLRS) is disordered. The span at 366-381 (PPVSASSQSMRDSLRS) shows a compositional bias: polar residues.

Belongs to the TPT transporter family. SLC35D subfamily. Homooligomer.

It localises to the golgi apparatus membrane. The protein resides in the cytoplasmic vesicle membrane. Its subcellular location is the endoplasmic reticulum membrane. Its function is as follows. Involved in the import of GDP-mannose from the cytoplasm into the Golgi lumen. This Aspergillus niger (strain ATCC MYA-4892 / CBS 513.88 / FGSC A1513) protein is GDP-mannose transporter (gmt1).